The sequence spans 253 residues: Phosphoglycerate mutase 2 (253 aa).

Position 3 is a phosphothreonine (T3). Residues 10 to 17, 23 to 24, R62, 89 to 92, K100, and 116 to 117 contribute to the substrate site; these read RHGESSWN, CG, ERHY, and RR. H11 (tele-phosphohistidine intermediate) is an active-site residue. Residues S14 and S15 each carry the phosphoserine modification. E89 serves as the catalytic Proton donor/acceptor. At S118 the chain carries Phosphoserine. At T121 the chain carries Phosphothreonine. Phosphotyrosine is present on residues Y132 and Y133. S135 is modified (phosphoserine). T152 bears the Phosphothreonine mark. 187–188 contributes to the substrate binding site; sequence GN.

It belongs to the phosphoglycerate mutase family. BPG-dependent PGAM subfamily. In terms of assembly, homodimer. Interacts with ENO1.

The catalysed reaction is (2R)-2-phosphoglycerate = (2R)-3-phosphoglycerate. It carries out the reaction (2R)-3-phospho-glyceroyl phosphate = (2R)-2,3-bisphosphoglycerate + H(+). Its function is as follows. Interconversion of 3- and 2-phosphoglycerate with 2,3-bisphosphoglycerate as the primer of the reaction. Can also catalyze the reaction of EC 5.4.2.4 (synthase), but with a reduced activity. The polypeptide is Phosphoglycerate mutase 2 (Pgam2) (Rattus norvegicus (Rat)).